The chain runs to 174 residues: RNA pyrophosphohydrolase (174 aa).

A Nudix hydrolase domain is found at 6-149 (GFRANVGIII…KRDVYRKVMK (144 aa)). A Nudix box motif is present at residues 38–59 (GGVDEGESAEQAMYRELYEEVG).

Belongs to the Nudix hydrolase family. RppH subfamily. Requires a divalent metal cation as cofactor.

Its function is as follows. Accelerates the degradation of transcripts by removing pyrophosphate from the 5'-end of triphosphorylated RNA, leading to a more labile monophosphorylated state that can stimulate subsequent ribonuclease cleavage. This chain is RNA pyrophosphohydrolase, found in Shewanella loihica (strain ATCC BAA-1088 / PV-4).